A 56-amino-acid chain; its full sequence is uncharacterized protein (56 aa).

The next 2 membrane-spanning stretches (helical) occupy residues 6 to 26 and 29 to 49; these read VILL…LLNG and VDFL…FVVV.

It is found in the cell membrane. This is an uncharacterized protein from Bacillus subtilis (strain 168).